Reading from the N-terminus, the 331-residue chain is Ribosomal RNA small subunit methyltransferase C (331 aa).

This sequence belongs to the methyltransferase superfamily. RsmC family. In terms of assembly, monomer.

It localises to the cytoplasm. The enzyme catalyses guanosine(1207) in 16S rRNA + S-adenosyl-L-methionine = N(2)-methylguanosine(1207) in 16S rRNA + S-adenosyl-L-homocysteine + H(+). Its function is as follows. Specifically methylates the guanine in position 1207 of 16S rRNA in the 30S particle. This chain is Ribosomal RNA small subunit methyltransferase C, found in Pseudomonas putida (strain W619).